Here is an 88-residue protein sequence, read N- to C-terminus: Beta-insect excitatory toxin LqhIT1a (88 aa).

A signal peptide spans Met1–Gly18. The LCN-type CS-alpha/beta domain occupies Lys20 to Asp83. 4 cysteine pairs are disulfide-bonded: Cys34–Cys55, Cys40–Cys60, Cys44–Cys62, and Cys56–Cys82.

This sequence belongs to the long (4 C-C) scorpion toxin superfamily. Sodium channel inhibitor family. Beta subfamily. Expressed by the venom gland.

The protein resides in the secreted. Its function is as follows. Excitatory insect toxins induce a spastic paralysis. They bind voltage-independently at site-4 of sodium channels (Nav) and shift the voltage of activation toward more negative potentials thereby affecting sodium channel activation and promoting spontaneous and repetitive firing. The chain is Beta-insect excitatory toxin LqhIT1a from Leiurus hebraeus (Hebrew deathstalker scorpion).